We begin with the raw amino-acid sequence, 276 residues long: Large ribosomal subunit protein uL2 (276 aa).

A disordered region spans residues 219-276 (TVRGSVMNPNDHPHGGGEGKQPIGRKQQMTPWGKKARGIKTRDKKKASTSMIVRRRNG). Basic residues predominate over residues 252-276 (KKARGIKTRDKKKASTSMIVRRRNG).

Belongs to the universal ribosomal protein uL2 family. In terms of assembly, part of the 50S ribosomal subunit. Forms a bridge to the 30S subunit in the 70S ribosome.

One of the primary rRNA binding proteins. Required for association of the 30S and 50S subunits to form the 70S ribosome, for tRNA binding and peptide bond formation. It has been suggested to have peptidyltransferase activity; this is somewhat controversial. Makes several contacts with the 16S rRNA in the 70S ribosome. The protein is Large ribosomal subunit protein uL2 of Acholeplasma laidlawii (strain PG-8A).